A 322-amino-acid polypeptide reads, in one-letter code: Pantothenate kinase (322 aa).

100–107 (GSVAVGKS) is a binding site for ATP.

Belongs to the prokaryotic pantothenate kinase family.

The protein localises to the cytoplasm. The catalysed reaction is (R)-pantothenate + ATP = (R)-4'-phosphopantothenate + ADP + H(+). It functions in the pathway cofactor biosynthesis; coenzyme A biosynthesis; CoA from (R)-pantothenate: step 1/5. The polypeptide is Pantothenate kinase (Brucella canis (strain ATCC 23365 / NCTC 10854 / RM-666)).